The primary structure comprises 341 residues: S-adenosylmethionine:tRNA ribosyltransferase-isomerase (341 aa).

It belongs to the QueA family. In terms of assembly, monomer.

It localises to the cytoplasm. The catalysed reaction is 7-aminomethyl-7-carbaguanosine(34) in tRNA + S-adenosyl-L-methionine = epoxyqueuosine(34) in tRNA + adenine + L-methionine + 2 H(+). Its pathway is tRNA modification; tRNA-queuosine biosynthesis. In terms of biological role, transfers and isomerizes the ribose moiety from AdoMet to the 7-aminomethyl group of 7-deazaguanine (preQ1-tRNA) to give epoxyqueuosine (oQ-tRNA). The sequence is that of S-adenosylmethionine:tRNA ribosyltransferase-isomerase from Clostridium perfringens (strain SM101 / Type A).